The primary structure comprises 493 residues: Ferruginol synthase 1 (493 aa).

Residues 2-22 form a helical membrane-spanning segment; that stretch reads DSFPLLAALFFILAATWFISF. Cys-437 is a heme binding site.

Belongs to the cytochrome P450 family. Heme serves as cofactor. In terms of tissue distribution, expressed in leaf glandular trichomes.

The protein resides in the membrane. It carries out the reaction abieta-8,11,13-triene + reduced [NADPH--hemoprotein reductase] + O2 = ferruginol + oxidized [NADPH--hemoprotein reductase] + H2O + H(+). It catalyses the reaction ferruginol + reduced [NADPH--hemoprotein reductase] + O2 = 11-hydroxyferruginol + oxidized [NADPH--hemoprotein reductase] + H2O + H(+). The catalysed reaction is miltiradiene + 2 reduced [NADPH--hemoprotein reductase] + 2 O2 = 11-oxomiltiradiene + 2 oxidized [NADPH--hemoprotein reductase] + 3 H2O + 2 H(+). Its pathway is secondary metabolite biosynthesis; terpenoid biosynthesis. Its function is as follows. Monooxygenase involved in the biosynthesis of labdane-related diterpenes natural products. Catalyzes the oxidation of abietatriene to produce ferruginol. Catalyzes the oxidation of ferruginol at C-12 to produce 11-hydroxyferruginol. Ferruginol and 11-hydroxyferruginol are intermediates in the biosynthesis of carnosate, a potent antioxidant. May also convert miltiradiene into 11-oxomiltiradiene. The protein is Ferruginol synthase 1 of Rosmarinus officinalis (Rosemary).